The sequence spans 269 residues: Energy-coupling factor transporter transmembrane protein EcfT (269 aa).

The next 6 membrane-spanning stretches (helical) occupy residues Arg-45–Leu-65, Val-75–Ile-95, Met-110–Leu-130, Phe-153–Leu-173, Phe-202–Leu-222, and Cys-244–Leu-264.

Belongs to the energy-coupling factor EcfT family. Forms a stable energy-coupling factor (ECF) transporter complex composed of 2 membrane-embedded substrate-binding proteins (S component), 2 ATP-binding proteins (A component) and 2 transmembrane proteins (T component). May be able to interact with more than 1 S component at a time.

Its subcellular location is the cell membrane. Functionally, transmembrane (T) component of an energy-coupling factor (ECF) ABC-transporter complex. Unlike classic ABC transporters this ECF transporter provides the energy necessary to transport a number of different substrates. The protein is Energy-coupling factor transporter transmembrane protein EcfT of Thermanaerovibrio acidaminovorans (strain ATCC 49978 / DSM 6589 / Su883) (Selenomonas acidaminovorans).